Reading from the N-terminus, the 396-residue chain is 1-deoxy-D-xylulose 5-phosphate reductoisomerase (396 aa).

Residues Thr13, Gly14, Ser15, Val16, and Asn127 each coordinate NADPH. Residue Lys128 coordinates 1-deoxy-D-xylulose 5-phosphate. Glu129 is a binding site for NADPH. A Mn(2+)-binding site is contributed by Asp153. 1-deoxy-D-xylulose 5-phosphate contacts are provided by Ser154, Glu155, Ser184, and His207. Glu155 provides a ligand contact to Mn(2+). Gly213 provides a ligand contact to NADPH. The 1-deoxy-D-xylulose 5-phosphate site is built by Ser220, Asn225, Lys226, and Glu229. Glu229 lines the Mn(2+) pocket.

Belongs to the DXR family. Requires Mg(2+) as cofactor. It depends on Mn(2+) as a cofactor.

The catalysed reaction is 2-C-methyl-D-erythritol 4-phosphate + NADP(+) = 1-deoxy-D-xylulose 5-phosphate + NADPH + H(+). It participates in isoprenoid biosynthesis; isopentenyl diphosphate biosynthesis via DXP pathway; isopentenyl diphosphate from 1-deoxy-D-xylulose 5-phosphate: step 1/6. Functionally, catalyzes the NADPH-dependent rearrangement and reduction of 1-deoxy-D-xylulose-5-phosphate (DXP) to 2-C-methyl-D-erythritol 4-phosphate (MEP). The protein is 1-deoxy-D-xylulose 5-phosphate reductoisomerase of Pseudomonas fluorescens (strain SBW25).